The sequence spans 364 residues: tRNA-specific 2-thiouridylase MnmA 2 (364 aa).

ATP-binding positions include 10–17 and M36; that span reads GMSGGVDS. C106 functions as the Nucleophile in the catalytic mechanism. A disulfide bridge links C106 with C204. G130 serves as a coordination point for ATP. An interaction with tRNA region spans residues 154–156; that stretch reads KDQ. The active-site Cysteine persulfide intermediate is the C204. Residues 310 to 311 are interaction with tRNA; it reads RY.

It belongs to the MnmA/TRMU family.

It localises to the cytoplasm. The enzyme catalyses S-sulfanyl-L-cysteinyl-[protein] + uridine(34) in tRNA + AH2 + ATP = 2-thiouridine(34) in tRNA + L-cysteinyl-[protein] + A + AMP + diphosphate + H(+). Functionally, catalyzes the 2-thiolation of uridine at the wobble position (U34) of tRNA, leading to the formation of s(2)U34. The sequence is that of tRNA-specific 2-thiouridylase MnmA 2 from Thermoanaerobacter pseudethanolicus (strain ATCC 33223 / 39E) (Clostridium thermohydrosulfuricum).